Here is a 250-residue protein sequence, read N- to C-terminus: Probable transcriptional regulatory protein SCO1521 (250 aa).

It belongs to the TACO1 family.

The protein localises to the cytoplasm. The polypeptide is Probable transcriptional regulatory protein SCO1521 (Streptomyces coelicolor (strain ATCC BAA-471 / A3(2) / M145)).